The sequence spans 385 residues: GDP-D-glucose phosphorylase 1 (385 aa).

Residue H218 is the Tele-GMP-histidine intermediate of the active site.

The protein belongs to the GDPGP1 family.

Its subcellular location is the cytoplasm. The enzyme catalyses GDP-alpha-D-glucose + phosphate = alpha-D-glucose 1-phosphate + GDP + H(+). Its function is as follows. Specific and highly efficient GDP-D-glucose phosphorylase regulating the levels of GDP-D-glucose in cells. This is GDP-D-glucose phosphorylase 1 (GDPGP1) from Macaca fascicularis (Crab-eating macaque).